The sequence spans 134 residues: Cerato-platanin (134 aa).

The N-terminal stretch at 1-14 is a signal peptide; sequence MKFSILPMIASAMA. Positions 18 to 20 are binding of oligomers of N-acetylglucosamine (GlcNAc); sequence SYD. Binding of N-acetylglucosamine tetramer (GlcNAc-4) regions lie at residues 31–43, 65–68, and 91–95; these read SVAC…GLMA, GWDS, and DSGRG. Cystine bridges form between Cys-34/Cys-71 and Cys-74/Cys-129. Residues 113–116 form a binding of oligomers of N-acetylglucosamine (GlcNAc) region; that stretch reads AGRV.

The protein belongs to the cerato-platanin family. In terms of assembly, monomer.

The protein localises to the secreted. The protein resides in the cell wall. Functionally, phytotoxin which causes production of phytoalexin in platanus acerifolia, platanus occidentalis and platanus orientalis. Induces cell necrosis in tobacco leaves, and in callus cells and leaves of P.acerifolia. Induces reactive oxygen species (ROS) synthesis, nitric oxide (NO) production and mitogen-activated protein kinases (MAPKs) phosphorylation in the leaves of A.thaliana and P.acerifolia. Results in H(2)O(2) production on the epidermis around the stomata, rapid closure of the stomata, reduced photosynthetic and CO(2) assimilation rate, and an increase in a number of volatile organic compound (VOC) emission in A.thaliana leaves. Induces overexpression of genes related to salicylic acid- and ethylene-signaling, camalexin synthesis, ROS production and oxidative stress, and genes of various receptor kinases, and down-regulation of a number of jasmonic acid (JA)-signaling genes in A.thaliana leaves. Renders resistance against C.platani in A.thaliana and P.acerifolia. Renders localised resistance of A.thaliana against infection by virulent foliar pathogens B.cinerea and P.syringae pv. tomato. Binds cellulose analog carboxymethyl cellulose (CMC). Expansin-like protein with probable fungal and plant cell wall loosening activity based on its non-enzymatic cellulose weakening activity in vitro. Increases glucose production by cellulase after pre-incubation of cellulose with this protein. In contrast, according to PubMed:23512479, no synergistic effect with cellulases. May have a structural role in the fungal cell wall based on its ability to bind chitin, but does not bind beta-1,3-glucan. The protein is Cerato-platanin of Ceratocystis fimbriata f. sp. platani.